Here is a 368-residue protein sequence, read N- to C-terminus: Metacaspase-6 (368 aa).

Residues His-86 and Cys-139 contribute to the active site. Position 139 is an S-nitrosocysteine (Cys-139). Positions 153 to 174 are disordered; sequence GESTKKKKDSGDSSTINKETEA.

Belongs to the peptidase C14B family. Proteolytically processed; by an autocatalytic mechanism. In terms of tissue distribution, expressed in roots and flower buds.

The protein is Metacaspase-6 (AMC6) of Arabidopsis thaliana (Mouse-ear cress).